The following is a 289-amino-acid chain: DNA repair protein rad14 (289 aa).

Residues Cys116, Cys119, Cys137, and Cys140 each coordinate Zn(2+). The segment at Cys116–Cys140 is a zinc-finger region.

The protein belongs to the XPA family. In terms of assembly, interacts with hrq1.

The protein localises to the nucleus. Its function is as follows. Involved in nucleotide excision repair (NER). Functional in repair of ultraviolet radiation induced damages and in mitotic mutation avoidance. Binds damaged DNA. Binds specifically to base-base mismatches or small insertion/deletion loops with unpaired nucleotides. Maintains GT repeat stability. Functions as a part of the short-patch excision repair system. The polypeptide is DNA repair protein rad14 (Schizosaccharomyces pombe (strain 972 / ATCC 24843) (Fission yeast)).